The sequence spans 87 residues: Cytochrome c oxidase subunit 6B1 (87 aa).

Residues 28–74 (TRNCWQNYLDFHRCQKAMTTKGGNVSVCEWYQRVYQSLCPTSWVTDW) form the CHCH domain. The Cx9C motif motif lies at 31-41 (CWQNYLDFHRC). Cystine bridges form between C31-C66 and C41-C55. A Cx10C motif motif is present at residues 55 to 66 (CEWYQRVYQSLC).

The protein localises to the mitochondrion intermembrane space. Its function is as follows. Connects the two COX monomers into the physiological dimeric form. The protein is Cytochrome c oxidase subunit 6B1 (COX6B1) of Macaca fascicularis (Crab-eating macaque).